Consider the following 404-residue polypeptide: MAQQGKVEPQDQDSFLDDQPGIRPIPSFDDMPLHQNLLRGIYSHGFEKPSSIQQRAIVPFTRGGDIIAQAQSGTGKTGAFSIGLLQRLDFRHNVLQGLVLSPTRELAMQTAEVITRIGEFLAEGSSSFCATFVGGTRVQDDYRKLQSGTIVAVGTPGRVVDVTKRGAMRTESLRVLVLDEADEMLSQGFAEQIYDIFRFLPKEIQVALFSATMPDDVLELTKKFMRDPTRILVKRESLTLEGIKQFFIAVEEEHKLDTLMDLYETVSIAQSVIFANTRRKVDWLASQLNSSNHTVSCMHSEMSKQEREKVMGTFRNGSSRVLVTTDLVARGIDVHHVNIVINFDLPTNKENYLHRIGRGGRYGRKGVAINFVTQKDVEVLREIESHYHTQIEELPVDFAAYLGE.

The tract at residues 1–28 (MAQQGKVEPQDQDSFLDDQPGIRPIPSF) is disordered. A Q motif motif is present at residues 26–54 (PSFDDMPLHQNLLRGIYSHGFEKPSSIQQ). The 175-residue stretch at 57 to 231 (IVPFTRGGDI…KKFMRDPTRI (175 aa)) folds into the Helicase ATP-binding domain. 70 to 77 (AQSGTGKT) contacts ATP. The short motif at 179-182 (DEAD) is the DEAD box element. A Helicase C-terminal domain is found at 242–402 (GIKQFFIAVE…ELPVDFAAYL (161 aa)).

The protein belongs to the DEAD box helicase family. eIF4A subfamily. EIF4F is a multi-subunit complex, the composition of which varies with external and internal environmental conditions. It is composed of at least EIF4A, EIF4E and EIF4G.

The enzyme catalyses ATP + H2O = ADP + phosphate + H(+). ATP-dependent RNA helicase which is a subunit of the eIF4F complex involved in cap recognition and is required for mRNA binding to ribosome. In the current model of translation initiation, eIF4A unwinds RNA secondary structures in the 5'-UTR of mRNAs which is necessary to allow efficient binding of the small ribosomal subunit, and subsequent scanning for the initiator codon. The chain is Probable eukaryotic initiation factor 4A from Trypanosoma brucei brucei (strain 927/4 GUTat10.1).